Reading from the N-terminus, the 213-residue chain is MRMRHKPWADDFLAENADIAISNPADYKGKWNTVFGNDNPIHIEVGTGKGQFISGMAKQNPDINYIGIELFKSVIVTAVQKVKDSEAQNVKLLNIDADTLTDVFEPGEVKRVYLNFSDPWPKKRHEKRRLTYSHFLKKYEEVMGKGGSIHFKTDNRGLFEYSLKSFSEYGLLLTYVSLDLHNSNLEGNIMTEYEEKFSALGQPIYRAEVEWRT.

Glu-44, Glu-69, Asp-96, and Asp-118 together coordinate S-adenosyl-L-methionine. Residue Asp-118 is part of the active site. Lys-122 serves as a coordination point for substrate. The interaction with RNA stretch occupies residues 124-129 (RHEKRR). Residues Asp-154 and 191–194 (TEYE) each bind substrate.

Belongs to the class I-like SAM-binding methyltransferase superfamily. TrmB family. In terms of assembly, homodimer.

The enzyme catalyses guanosine(46) in tRNA + S-adenosyl-L-methionine = N(7)-methylguanosine(46) in tRNA + S-adenosyl-L-homocysteine. It functions in the pathway tRNA modification; N(7)-methylguanine-tRNA biosynthesis. In terms of biological role, catalyzes the formation of N(7)-methylguanine at position 46 (m7G46) in tRNA. The polypeptide is tRNA (guanine-N(7)-)-methyltransferase (Bacillus subtilis (strain 168)).